Here is a 179-residue protein sequence, read N- to C-terminus: Ribosome maturation factor RimM (179 aa).

The PRC barrel domain occupies 100-176 (KEEFHLLELI…FLIINPPNGL (77 aa)).

This sequence belongs to the RimM family. In terms of assembly, binds ribosomal protein uS19.

It localises to the cytoplasm. Functionally, an accessory protein needed during the final step in the assembly of 30S ribosomal subunit, possibly for assembly of the head region. Essential for efficient processing of 16S rRNA. May be needed both before and after RbfA during the maturation of 16S rRNA. It has affinity for free ribosomal 30S subunits but not for 70S ribosomes. The protein is Ribosome maturation factor RimM of Prochlorococcus marinus (strain MIT 9312).